A 119-amino-acid chain; its full sequence is Large ribosomal subunit protein uL22 (119 aa).

This sequence belongs to the universal ribosomal protein uL22 family. In terms of assembly, part of the 50S ribosomal subunit.

Functionally, this protein binds specifically to 23S rRNA; its binding is stimulated by other ribosomal proteins, e.g. L4, L17, and L20. It is important during the early stages of 50S assembly. It makes multiple contacts with different domains of the 23S rRNA in the assembled 50S subunit and ribosome. The globular domain of the protein is located near the polypeptide exit tunnel on the outside of the subunit, while an extended beta-hairpin is found that lines the wall of the exit tunnel in the center of the 70S ribosome. This is Large ribosomal subunit protein uL22 from Chlorobium luteolum (strain DSM 273 / BCRC 81028 / 2530) (Pelodictyon luteolum).